Here is a 449-residue protein sequence, read N- to C-terminus: Exodeoxyribonuclease 7 large subunit (449 aa).

It belongs to the XseA family. Heterooligomer composed of large and small subunits.

The protein localises to the cytoplasm. It catalyses the reaction Exonucleolytic cleavage in either 5'- to 3'- or 3'- to 5'-direction to yield nucleoside 5'-phosphates.. Bidirectionally degrades single-stranded DNA into large acid-insoluble oligonucleotides, which are then degraded further into small acid-soluble oligonucleotides. The sequence is that of Exodeoxyribonuclease 7 large subunit from Salmonella heidelberg (strain SL476).